A 933-amino-acid polypeptide reads, in one-letter code: Protein translocase subunit SecA (933 aa).

ATP is bound by residues Gln90, 108–112 (GEGKT), and Asp504. Positions 539–570 (GMGSNNRRPQGFGQDSKKKKWQPSADIFPTDL) are disordered.

It belongs to the SecA family. In terms of assembly, monomer and homodimer. Part of the essential Sec protein translocation apparatus which comprises SecA, SecYEG and auxiliary proteins SecDF. Other proteins may also be involved.

Its subcellular location is the cell inner membrane. The protein localises to the cellular thylakoid membrane. It is found in the cytoplasm. It catalyses the reaction ATP + H2O + cellular proteinSide 1 = ADP + phosphate + cellular proteinSide 2.. Functionally, part of the Sec protein translocase complex. Interacts with the SecYEG preprotein conducting channel. Has a central role in coupling the hydrolysis of ATP to the transfer of proteins into and across the cell membrane, serving as an ATP-driven molecular motor driving the stepwise translocation of polypeptide chains across the membrane. Probably participates in protein translocation into and across both the cytoplasmic and thylakoid membranes in cyanobacterial cells. This Crocosphaera subtropica (strain ATCC 51142 / BH68) (Cyanothece sp. (strain ATCC 51142)) protein is Protein translocase subunit SecA.